A 173-amino-acid chain; its full sequence is Large ribosomal subunit protein uL18 (173 aa).

The protein belongs to the universal ribosomal protein uL18 family. As to quaternary structure, part of the 50S ribosomal subunit. Contacts the 5S and 23S rRNAs.

In terms of biological role, this is one of the proteins that bind and probably mediate the attachment of the 5S RNA into the large ribosomal subunit, where it forms part of the central protuberance. The polypeptide is Large ribosomal subunit protein uL18 (Methanococcoides burtonii (strain DSM 6242 / NBRC 107633 / OCM 468 / ACE-M)).